The chain runs to 218 residues: Orotate phosphoribosyltransferase (218 aa).

Lys26 lines the 5-phospho-alpha-D-ribose 1-diphosphate pocket. 34 to 35 (FF) is an orotate binding site. Residues 72 to 73 (YK), Arg99, Lys100, Lys103, His105, and 124 to 132 (DDVITAGTA) contribute to the 5-phospho-alpha-D-ribose 1-diphosphate site. 2 residues coordinate orotate: Thr128 and Arg156.

It belongs to the purine/pyrimidine phosphoribosyltransferase family. PyrE subfamily. Homodimer. Requires Mg(2+) as cofactor.

It catalyses the reaction orotidine 5'-phosphate + diphosphate = orotate + 5-phospho-alpha-D-ribose 1-diphosphate. It functions in the pathway pyrimidine metabolism; UMP biosynthesis via de novo pathway; UMP from orotate: step 1/2. Functionally, catalyzes the transfer of a ribosyl phosphate group from 5-phosphoribose 1-diphosphate to orotate, leading to the formation of orotidine monophosphate (OMP). The protein is Orotate phosphoribosyltransferase of Hamiltonella defensa subsp. Acyrthosiphon pisum (strain 5AT).